Here is a 244-residue protein sequence, read N- to C-terminus: Precorrin-6A reductase (244 aa).

This sequence belongs to the precorrin-6x reductase family.

The enzyme catalyses precorrin-6B + NADP(+) = precorrin-6A + NADPH + 2 H(+). Its pathway is cofactor biosynthesis; adenosylcobalamin biosynthesis; cob(II)yrinate a,c-diamide from precorrin-2 (aerobic route): step 6/10. Functionally, catalyzes the reduction of the macrocycle of precorrin-6X into precorrin-6Y. In Mycobacterium tuberculosis (strain CDC 1551 / Oshkosh), this protein is Precorrin-6A reductase (cobK).